Consider the following 212-residue polypeptide: Adenylate kinase (212 aa).

Position 10-15 (10-15) interacts with ATP; it reads GAGKGT. The segment at 30 to 59 is NMP; that stretch reads STGDMFRAAMANQTEMGRLAKSYIDKGELV. Residues T31, R36, 57–59, 86–89, and Q93 contribute to the AMP site; these read ELV and GYPR. The LID stretch occupies residues 127 to 159; sequence GRIINRKTGETFHKVFNPPVDYKEEDYYQREDD. Residues R128 and 137–138 each bind ATP; that span reads TF. AMP-binding residues include R156 and R167. An ATP-binding site is contributed by Q195.

Belongs to the adenylate kinase family. As to quaternary structure, monomer.

The protein localises to the cytoplasm. The enzyme catalyses AMP + ATP = 2 ADP. Its pathway is purine metabolism; AMP biosynthesis via salvage pathway; AMP from ADP: step 1/1. In terms of biological role, catalyzes the reversible transfer of the terminal phosphate group between ATP and AMP. Plays an important role in cellular energy homeostasis and in adenine nucleotide metabolism. This is Adenylate kinase from Streptococcus pyogenes serotype M12 (strain MGAS2096).